The primary structure comprises 25 residues: Spinigerin (25 aa).

It is found in the secreted. Active against Gram-positive bacteria B.megaterium and M.luteus, Gram-negative bacteria E.coli SBS363 and D22, K.pneumoniae, S.typhimurium and P.aeruginosa, yeast C.albicans and filamentous fungi F.culmorum, N.crassa, N.hematococca and T.viridae. Inactive against Gram-positive bacteria B.subtilis, S.pyogenes, B.thuringiensis and S.aureus, Gram-negative bacteria E.cloacae and E.carotovora and filamentous fungus B.bassiana. In Pseudacanthotermes spiniger, this protein is Spinigerin.